A 208-amino-acid chain; its full sequence is Myosin light chain 6B (208 aa).

The tract at residues 1-51 is disordered; it reads MPPKKDVPVKKPAGPSISKPAAKPAAAGAPPAKTKAEPAVPQAPQKTQEPP. The span at 10 to 40 shows a compositional bias: low complexity; the sequence is KKPAGPSISKPAAKPAAAGAPPAKTKAEPAV. 3 EF-hand domains span residues 64 to 99, 141 to 176, and 176 to 208; these read DQLE…LGQN, GTYE…LGEK, and KMTE…ILSV.

In terms of assembly, myosin is a hexamer of 2 heavy chains and 4 light chains.

Regulatory light chain of myosin. Does not bind calcium. In Homo sapiens (Human), this protein is Myosin light chain 6B (MYL6B).